A 391-amino-acid polypeptide reads, in one-letter code: GTPase Obg (391 aa).

Positions 1 to 159 (MKFIDEALIR…RDLLLELMLL (159 aa)) constitute an Obg domain. One can recognise an OBG-type G domain in the interval 160 to 333 (ADVGMLGLPN…LTRDIMDFIE (174 aa)). GTP is bound by residues 166–173 (GLPNAGKS), 191–195 (FTTLV), 213–216 (DIPG), 283–286 (NKID), and 314–316 (SAA). S173 and T193 together coordinate Mg(2+).

It belongs to the TRAFAC class OBG-HflX-like GTPase superfamily. OBG GTPase family. As to quaternary structure, monomer. The cofactor is Mg(2+).

The protein localises to the cytoplasm. Its function is as follows. An essential GTPase which binds GTP, GDP and possibly (p)ppGpp with moderate affinity, with high nucleotide exchange rates and a fairly low GTP hydrolysis rate. Plays a role in control of the cell cycle, stress response, ribosome biogenesis and in those bacteria that undergo differentiation, in morphogenesis control. The protein is GTPase Obg of Actinobacillus pleuropneumoniae serotype 7 (strain AP76).